Reading from the N-terminus, the 414-residue chain is Calcium/calmodulin-dependent protein kinase cmkA (414 aa).

Residues 23-278 enclose the Protein kinase domain; sequence YRFGRTLGAG…SEEALKHPWL (256 aa). Residues 29–37 and Lys-50 contribute to the ATP site; that span reads LGAGTYGIV. The active-site Proton acceptor is Asp-142. The interval 278–314 is autoinhibitory domain; sequence LKGESASDRDLLPEIRAYIARSRLKRGIEIIKLANRI. The interval 293-315 is calmodulin-binding; that stretch reads RAYIARSRLKRGIEIIKLANRIE. 2 disordered regions span residues 320 to 375 and 394 to 414; these read QEED…KRSL and EMKENEEREKVEREARERAHS. The segment covering 351–364 has biased composition (polar residues); that stretch reads STENSNTHPASTGN.

Belongs to the protein kinase superfamily. CAMK Ser/Thr protein kinase family. CaMK subfamily. Monomer. Post-translationally, autophosphorylated in a calcium/calmodulin-dependent manner.

It carries out the reaction L-seryl-[protein] + ATP = O-phospho-L-seryl-[protein] + ADP + H(+). It catalyses the reaction L-threonyl-[protein] + ATP = O-phospho-L-threonyl-[protein] + ADP + H(+). With respect to regulation, activated by Ca(2+)/calmodulin. Binding of calmodulin may relieve intrasteric autoinhibition. Functionally, calcium/calmodulin-dependent protein kinase. Required in nuclear division cycle for progression from G2 to mitosis. Required for hyphal growth. The polypeptide is Calcium/calmodulin-dependent protein kinase cmkA (cmkA) (Emericella nidulans (strain FGSC A4 / ATCC 38163 / CBS 112.46 / NRRL 194 / M139) (Aspergillus nidulans)).